The sequence spans 474 residues: tRNA-2-methylthio-N(6)-dimethylallyladenosine synthase (474 aa).

Positions 3–120 (QKLHIKTWGC…LPEMINQIRG (118 aa)) constitute an MTTase N-terminal domain. The [4Fe-4S] cluster site is built by Cys-12, Cys-49, Cys-83, Cys-157, Cys-161, and Cys-164. Residues 143–375 (RAEGPTAFVS…QQRINNQAAQ (233 aa)) form the Radical SAM core domain. Residues 378-441 (RAMLGTEQRV…TNSLRGEVVR (64 aa)) form the TRAM domain.

Belongs to the methylthiotransferase family. MiaB subfamily. In terms of assembly, monomer. [4Fe-4S] cluster is required as a cofactor.

It localises to the cytoplasm. The enzyme catalyses N(6)-dimethylallyladenosine(37) in tRNA + (sulfur carrier)-SH + AH2 + 2 S-adenosyl-L-methionine = 2-methylsulfanyl-N(6)-dimethylallyladenosine(37) in tRNA + (sulfur carrier)-H + 5'-deoxyadenosine + L-methionine + A + S-adenosyl-L-homocysteine + 2 H(+). Its function is as follows. Catalyzes the methylthiolation of N6-(dimethylallyl)adenosine (i(6)A), leading to the formation of 2-methylthio-N6-(dimethylallyl)adenosine (ms(2)i(6)A) at position 37 in tRNAs that read codons beginning with uridine. The polypeptide is tRNA-2-methylthio-N(6)-dimethylallyladenosine synthase (Histophilus somni (strain 129Pt) (Haemophilus somnus)).